We begin with the raw amino-acid sequence, 117 residues long: Large ribosomal subunit protein bL20 (117 aa).

Belongs to the bacterial ribosomal protein bL20 family.

Binds directly to 23S ribosomal RNA and is necessary for the in vitro assembly process of the 50S ribosomal subunit. It is not involved in the protein synthesizing functions of that subunit. This is Large ribosomal subunit protein bL20 from Oleidesulfovibrio alaskensis (strain ATCC BAA-1058 / DSM 17464 / G20) (Desulfovibrio alaskensis).